Here is a 298-residue protein sequence, read N- to C-terminus: Cyanophycinase (298 aa).

Residues Ser-155, Glu-173, and His-197 each act as charge relay system in the active site.

This sequence belongs to the peptidase S51 family.

It carries out the reaction [L-4-(L-arginin-2-N-yl)aspartate](n) + H2O = [L-4-(L-arginin-2-N-yl)aspartate](n-1) + L-4-(L-arginin-2-N-yl)aspartate. Exopeptidase that catalyzes the hydrolytic cleavage of multi-L-arginyl-poly-L-aspartic acid (cyanophycin; a water-insoluble reserve polymer) into aspartate-arginine dipeptides. The sequence is that of Cyanophycinase (cphB) from Trichormus variabilis (strain ATCC 29413 / PCC 7937) (Anabaena variabilis).